A 224-amino-acid polypeptide reads, in one-letter code: Claudin-17 (224 aa).

Topologically, residues 1–7 are cytoplasmic; that stretch reads MAFYPLQ. Residues 8–28 form a helical membrane-spanning segment; it reads IAGLVLGFFGLVGTIGTTLLP. Residues 29 to 81 are Extracellular-facing; that stretch reads QWRVSAFIGSNIIIFERIWEGLWMNCIQQAMVTLQCKFYNSILALPPVLEAAR. Residues 82–102 form a helical membrane-spanning segment; that stretch reads ALMCVAVALALVALIIGICGM. The Cytoplasmic portion of the chain corresponds to 103 to 124; that stretch reads KQLQCTGSSERVKAYLLGTSGV. Residues 125 to 145 traverse the membrane as a helical segment; that stretch reads LFILTGIFVLIPVSWTANIII. Residues 146–164 are Extracellular-facing; it reads RDFYDPTVHAGQKRELGGA. The chain crosses the membrane as a helical span at residues 165 to 185; the sequence is LFLGWATAAVLFIGGGLLCGY. Topologically, residues 186-224 are cytoplasmic; sequence CCCNRKERWHRYPVPAYRVPQKDNQRNVTVPRKSSTSYV.

This sequence belongs to the claudin family. In terms of assembly, does not form homotypic polymeric strands and it is not sufficient to form tight junctions by its own. Interacts with OCLN. As to expression, expressed at high levels in the kidney and at mucher lower levels in the brain. In the kidney, expression gradually decreases from the proximal tubule downstream to the distal convoluted tubule. Expressed in the thin ascending limb of Henle's loop, as well as in the thick ascending limb of Henle's loop. In the distal convoluted tubules, expressed only in a few tubules. Not detected in the collecting duct. In the brain, expressed in blood vessels (at protein level).

The protein resides in the cell junction. It is found in the tight junction. It localises to the cell membrane. It catalyses the reaction chloride(in) = chloride(out). The catalysed reaction is hydrogencarbonate(in) = hydrogencarbonate(out). The enzyme catalyses bromide(in) = bromide(out). It carries out the reaction iodide(out) = iodide(in). It catalyses the reaction fluoride(in) = fluoride(out). The catalysed reaction is nitrate(in) = nitrate(out). The enzyme catalyses thiocyanate(in) = thiocyanate(out). Its function is as follows. Channel-forming tight junction protein with selectivity for anions, including chloride and hydrogencarbonate, and for solutes smaller than 9 Angstrom in diameter. In the kidney proximal tubule, may be involved in quantitative reabsorption of filtered anions. Does not affect water permeability. This Mus musculus (Mouse) protein is Claudin-17 (Cldn17).